The primary structure comprises 358 residues: Uroporphyrinogen decarboxylase (358 aa).

Substrate is bound by residues Arg27 to Arg31, Asp77, Tyr154, Ser209, and His330.

This sequence belongs to the uroporphyrinogen decarboxylase family. As to quaternary structure, homodimer.

It is found in the cytoplasm. The enzyme catalyses uroporphyrinogen III + 4 H(+) = coproporphyrinogen III + 4 CO2. The protein operates within porphyrin-containing compound metabolism; protoporphyrin-IX biosynthesis; coproporphyrinogen-III from 5-aminolevulinate: step 4/4. In terms of biological role, catalyzes the decarboxylation of four acetate groups of uroporphyrinogen-III to yield coproporphyrinogen-III. This is Uroporphyrinogen decarboxylase from Acinetobacter baylyi (strain ATCC 33305 / BD413 / ADP1).